The primary structure comprises 362 residues: Glutaminase-asparaginase (362 aa).

The signal sequence occupies residues Met1–Ala25. The Asparaginase/glutaminase domain maps to Ser35–Tyr362. The active-site Acyl-ester intermediate is the Thr45. Residues Ser92 and Thr125–Asp126 each bind substrate.

The protein belongs to the asparaginase 1 family. In terms of assembly, homotetramer.

It is found in the periplasm. The catalysed reaction is L-glutamine + H2O = L-glutamate + NH4(+). The enzyme catalyses L-asparagine + H2O = L-aspartate + NH4(+). This Pseudomonas aeruginosa (strain ATCC 15692 / DSM 22644 / CIP 104116 / JCM 14847 / LMG 12228 / 1C / PRS 101 / PAO1) protein is Glutaminase-asparaginase (ansB).